Consider the following 901-residue polypeptide: HTH-type transcriptional regulator MalT (901 aa).

39 to 46 is a binding site for ATP; it reads SPAGYGKT. Positions 829-894 constitute an HTH luxR-type domain; sequence ELIRTSPLTQ…DAVQHAQQLL (66 aa). Residues 853–872 constitute a DNA-binding region (H-T-H motif); sequence NEQIAGELAVAATTIKTHIR.

The protein belongs to the MalT family. In terms of assembly, monomer in solution. Oligomerizes to an active state in the presence of the positive effectors ATP and maltotriose.

Its activity is regulated as follows. Activated by ATP and maltotriose, which are both required for DNA binding. Its function is as follows. Positively regulates the transcription of the maltose regulon whose gene products are responsible for uptake and catabolism of malto-oligosaccharides. Specifically binds to the promoter region of its target genes, recognizing a short DNA motif called the MalT box. This Salmonella typhi protein is HTH-type transcriptional regulator MalT.